The sequence spans 407 residues: Phosphopentomutase (407 aa).

Mn(2+)-binding residues include D10, D306, H311, D347, H348, and H359.

It belongs to the phosphopentomutase family. Mn(2+) serves as cofactor.

It localises to the cytoplasm. The catalysed reaction is 2-deoxy-alpha-D-ribose 1-phosphate = 2-deoxy-D-ribose 5-phosphate. It catalyses the reaction alpha-D-ribose 1-phosphate = D-ribose 5-phosphate. It functions in the pathway carbohydrate degradation; 2-deoxy-D-ribose 1-phosphate degradation; D-glyceraldehyde 3-phosphate and acetaldehyde from 2-deoxy-alpha-D-ribose 1-phosphate: step 1/2. In terms of biological role, isomerase that catalyzes the conversion of deoxy-ribose 1-phosphate (dRib-1-P) and ribose 1-phosphate (Rib-1-P) to deoxy-ribose 5-phosphate (dRib-5-P) and ribose 5-phosphate (Rib-5-P), respectively. The sequence is that of Phosphopentomutase from Edwardsiella ictaluri (strain 93-146).